Reading from the N-terminus, the 336-residue chain is Glyceraldehyde-3-phosphate dehydrogenase (336 aa).

NAD(+) is bound by residues 12–13 (RI), aspartate 34, and serine 120. Residues 150 to 152 (SCT), threonine 181, arginine 198, 211 to 212 (TG), and arginine 234 each bind D-glyceraldehyde 3-phosphate. The Nucleophile role is filled by cysteine 151. Asparagine 316 contacts NAD(+).

It belongs to the glyceraldehyde-3-phosphate dehydrogenase family. In terms of assembly, homotetramer.

The protein localises to the cytoplasm. The enzyme catalyses D-glyceraldehyde 3-phosphate + phosphate + NAD(+) = (2R)-3-phospho-glyceroyl phosphate + NADH + H(+). Its pathway is carbohydrate degradation; glycolysis; pyruvate from D-glyceraldehyde 3-phosphate: step 1/5. Functionally, catalyzes the oxidative phosphorylation of glyceraldehyde 3-phosphate (G3P) to 1,3-bisphosphoglycerate (BPG) using the cofactor NAD. The first reaction step involves the formation of a hemiacetal intermediate between G3P and a cysteine residue, and this hemiacetal intermediate is then oxidized to a thioester, with concomitant reduction of NAD to NADH. The reduced NADH is then exchanged with the second NAD, and the thioester is attacked by a nucleophilic inorganic phosphate to produce BPG. The protein is Glyceraldehyde-3-phosphate dehydrogenase (gapA) of Staphylococcus aureus.